The sequence spans 408 residues: Succinylornithine transaminase (408 aa).

Lys-252 carries the post-translational modification N6-(pyridoxal phosphate)lysine.

It belongs to the class-III pyridoxal-phosphate-dependent aminotransferase family. AstC subfamily. It depends on pyridoxal 5'-phosphate as a cofactor.

The catalysed reaction is N(2)-succinyl-L-ornithine + 2-oxoglutarate = N-succinyl-L-glutamate 5-semialdehyde + L-glutamate. The protein operates within amino-acid degradation; L-arginine degradation via AST pathway; L-glutamate and succinate from L-arginine: step 3/5. Catalyzes the transamination of N(2)-succinylornithine and alpha-ketoglutarate into N(2)-succinylglutamate semialdehyde and glutamate. Can also act as an acetylornithine aminotransferase. The chain is Succinylornithine transaminase from Salmonella heidelberg (strain SL476).